Here is a 591-residue protein sequence, read N- to C-terminus: Fidgetin-like protein 1 (591 aa).

2 disordered regions span residues 1–117 (MYSP…KSSL) and 223–249 (GQEPQKSKFQIPLDRQSSSQSNHSQPI). Basic and acidic residues predominate over residues 17-26 (KRPETEENRG). The segment covering 76–93 (DDDPESIVIDEDDEEDEP) has biased composition (acidic residues). Over residues 237 to 249 (RQSSSQSNHSQPI) the composition is skewed to polar residues. ATP-binding positions include alanine 319 and 359–364 (GTGKTM).

It belongs to the AAA ATPase family. Hexamer. The cofactor is Mg(2+).

The protein localises to the nucleus. It catalyses the reaction ATP + H2O = ADP + phosphate + H(+). Its function is as follows. Has a role in spindle assembly which acts in the progression through mitosis during embryogenesis. Required for fertility. The chain is Fidgetin-like protein 1 (figl-1) from Caenorhabditis briggsae.